A 170-amino-acid chain; its full sequence is Protein GrpE (170 aa).

The tract at residues 1 to 29 is disordered; it reads MSEEIKNEEIVEEVEATEEVVETPEKSEL. The segment covering 10–22 has biased composition (acidic residues); that stretch reads IVEEVEATEEVVE.

This sequence belongs to the GrpE family. As to quaternary structure, homodimer.

It localises to the cytoplasm. Functionally, participates actively in the response to hyperosmotic and heat shock by preventing the aggregation of stress-denatured proteins, in association with DnaK and GrpE. It is the nucleotide exchange factor for DnaK and may function as a thermosensor. Unfolded proteins bind initially to DnaJ; upon interaction with the DnaJ-bound protein, DnaK hydrolyzes its bound ATP, resulting in the formation of a stable complex. GrpE releases ADP from DnaK; ATP binding to DnaK triggers the release of the substrate protein, thus completing the reaction cycle. Several rounds of ATP-dependent interactions between DnaJ, DnaK and GrpE are required for fully efficient folding. This chain is Protein GrpE, found in Streptococcus suis (strain 98HAH33).